The sequence spans 445 residues: MATAASNHYSLLTSSASIVHAEPPGGMQQGAGGYREAQSLQVQGDYGALQSNGHPLSHAHWITALSHGGSGGGGGGGGGGGGGGGGGGDGSPWSTSPLGQPDIKPSVVVQQGGRGDELHGPGALQQQHQQQQQQQQQQQQQQQQQQQQQQQRPPHLVHHAANNHPGPGAWRSAAAAAHLPPSMGASNGGLLYSQPSFTVNGMLGAGGQPAGLHHHGLRDAHDEPHHADHHPHPHSHPHQQPPPPPPPQGPPGHPGAHHDPHSDEDTPTSDDLEQFAKQFKQRRIKLGFTQADVGLALGTLYGNVFSQTTICRFEALQLSFKNMCKLKPLLNKWLEEADSSSGSPTSIDKIASQGRKRKKRTSIEVSVKGALESHFLKCPKPSAQEITSLADSLQLEKEVVRVWFCNRRQKEKRMTPPGGTLPGAEDVYGGSRDTPPHHGVQTPVQ.

Disordered regions lie at residues 63–173 (TALS…WRSA), 203–269 (LGAG…TPTS), 336–361 (EADS…KKRT), and 411–445 (EKRM…TPVQ). Gly residues predominate over residues 68 to 90 (GGSGGGGGGGGGGGGGGGGGGDG). Positions 125–151 (QQQHQQQQQQQQQQQQQQQQQQQQQQQ) are enriched in low complexity. The segment covering 217–226 (LRDAHDEPHH) has biased composition (basic and acidic residues). Residues 227 to 237 (ADHHPHPHSHP) show a composition bias toward basic residues. Positions 239–253 (QQPPPPPPPQGPPGH) are enriched in pro residues. Positions 264–338 (EDTPTSDDLE…LLNKWLEEAD (75 aa)) constitute a POU-specific domain. S343 is subject to Phosphoserine. Residues 356-415 (KRKKRTSIEVSVKGALESHFLKCPKPSAQEITSLADSLQLEKEVVRVWFCNRRQKEKRMT) constitute a DNA-binding region (homeobox).

Belongs to the POU transcription factor family. Class-3 subfamily. In terms of assembly, interacts with PQBP1. Interaction with ISL1. Expressed specifically at high levels in the brain.

It localises to the nucleus. Its function is as follows. Transcription factor that plays a key role in neuronal differentiation. Binds preferentially to the recognition sequence which consists of two distinct half-sites, ('GCAT') and ('TAAT'), separated by a non-conserved spacer region of 0, 2, or 3 nucleotides. Acts as a transcriptional activator when binding cooperatively with SOX4, SOX11, or SOX12 to gene promoters. The combination of three transcription factors, ASCL1, POU3F2/BRN2 and MYT1L, is sufficient to reprogram fibroblasts and other somatic cells into induced neuronal (iN) cells in vitro. Acts downstream of ASCL1, accessing chromatin that has been opened by ASCL1, and promotes transcription of neuronal genes. This is POU domain, class 3, transcription factor 2 (Pou3f2) from Rattus norvegicus (Rat).